The chain runs to 473 residues: Ribulose bisphosphate carboxylase large chain (473 aa).

Substrate-binding residues include Asn116 and Thr166. The Proton acceptor role is filled by Lys168. A substrate-binding site is contributed by Lys170. Residues Lys194, Asp196, and Glu197 each contribute to the Mg(2+) site. Lys194 is modified (N6-carboxylysine). Residue His287 is the Proton acceptor of the active site. Residues Arg288, His320, and Ser372 each coordinate substrate.

The protein belongs to the RuBisCO large chain family. Type I subfamily. Heterohexadecamer of 8 large chains and 8 small chains. Mg(2+) is required as a cofactor.

The enzyme catalyses 2 (2R)-3-phosphoglycerate + 2 H(+) = D-ribulose 1,5-bisphosphate + CO2 + H2O. It carries out the reaction D-ribulose 1,5-bisphosphate + O2 = 2-phosphoglycolate + (2R)-3-phosphoglycerate + 2 H(+). In terms of biological role, ruBisCO catalyzes two reactions: the carboxylation of D-ribulose 1,5-bisphosphate, the primary event in carbon dioxide fixation, as well as the oxidative fragmentation of the pentose substrate. Both reactions occur simultaneously and in competition at the same active site. The chain is Ribulose bisphosphate carboxylase large chain from Nitrosomonas eutropha (strain DSM 101675 / C91 / Nm57).